The sequence spans 401 residues: MNPSIRLYAWQGTNADGLAVSGQMAGRSPAYVRAGLLRQGILVARLRPAGRAWRWPKRREKTDPAGFSRQLATLLKAGVPLLQAFEVMGRSGCDAAQAALLARLKQDVASGLGLADALQRHPGWFDTLYCNLVRVGEQSGTLDRQLEQLAGMLEQRLALHKKLRKAMIYPLLLLLTGLGVSAVLLLEVIPQFQSLFAGFDAALPAFTQWVIDLSTGLGRHAPVLLVSAVLLAVAARELYRKHRPARLWITQRVLGLPVFGKLLGQAALARFARSLATSYAAGVPLLDALGTVAKASGGELHQQAIQRLRQGMANGQGLNQAMAAEPLFPPLLVQLVAIGESSGTLDQMLEKAASHYEEQVSQALDQLTSLLEPAIVLVLGLLVGGLVVAMYLPIFQLGSLI.

3 helical membrane passes run 166–186 (AMIYPLLLLLTGLGVSAVLLL), 215–235 (TGLGRHAPVLLVSAVLLAVAA), and 375–395 (IVLVLGLLVGGLVVAMYLPIF).

The protein belongs to the GSP F family.

It is found in the cell inner membrane. Functionally, involved in the translocation of the type IV pilin (PilA). This chain is Type 4 fimbrial assembly protein PilC (pilC), found in Pseudomonas putida (Arthrobacter siderocapsulatus).